A 376-amino-acid chain; its full sequence is Enoyl-[acyl-carrier-protein] reductase, mitochondrial (376 aa).

Residue Y72 is the Proton donor of the active site. Residues N154, T182–V185, R205–R207, Y280–M283, Y305–I307, and K369 each bind NADP(+).

It belongs to the zinc-containing alcohol dehydrogenase family. Quinone oxidoreductase subfamily. As to quaternary structure, homodimer.

It is found in the mitochondrion matrix. It catalyses the reaction a 2,3-saturated acyl-[ACP] + NADP(+) = a (2E)-enoyl-[ACP] + NADPH + H(+). Catalyzes the NADPH-dependent reduction of trans-2-enoyl thioesters in mitochondrial fatty acid synthesis (fatty acid synthesis type II). Fatty acid chain elongation in mitochondria uses acyl carrier protein (ACP) as an acyl group carrier, but the enzyme accepts both ACP and CoA thioesters as substrates in vitro. Required for respiration and the maintenance of the mitochondrial compartment. The sequence is that of Enoyl-[acyl-carrier-protein] reductase, mitochondrial (ETR1) from Eremothecium gossypii (strain ATCC 10895 / CBS 109.51 / FGSC 9923 / NRRL Y-1056) (Yeast).